Reading from the N-terminus, the 87-residue chain is MEIENKNIKEIESIITDEIDNSNNIINNNNNGNINEHIINIQNEKKFELVELNPKFLKSPTMIVLALVLGVFSLVGLIFIIYFSIKK.

Residues 63 to 83 form a helical membrane-spanning segment; the sequence is IVLALVLGVFSLVGLIFIIYF.

The protein localises to the membrane. This is an uncharacterized protein from Dictyostelium discoideum (Social amoeba).